Here is a 268-residue protein sequence, read N- to C-terminus: MAAFADLDLRAGSDLKALRGLVETAAHLGYSVVAINHIVDFKEKKREIEKPIAVSELFTTLPIVQGKSRPIKILTRLTIIVTDPAHCNVLRATSSRVRLYDIVAVFPKTEKLFHVACTHLDVDLVCITVTEKLPFYFKRPPVNVAIERGLGFELVYGPAIRDATMRRYTISNALNLMQICKGKNVILSSAAERPLEIRGPYDVANLGLLFGLSENDGKAAVSTNCRAVFLHGETRKTAFGIISTVKKPRPSEADDESLPVCKKAKCEG.

Alanine 2 carries the N-acetylalanine modification. At serine 251 the chain carries Phosphoserine.

This sequence belongs to the eukaryotic/archaeal RNase P protein component 3 family. As to quaternary structure, component of nuclear RNase P and RNase MRP ribonucleoproteins. RNase P consists of a catalytic RNA moiety and about 10 protein subunits; POP1, POP4, POP5, POP7, RPP14, RPP21, RPP25, RPP30, RPP38 and RPP40. Within the RNase P complex, POP1, POP7 and RPP25 form the 'finger' subcomplex, POP5, RPP14, RPP40 and homodimeric RPP30 form the 'palm' subcomplex, and RPP21, POP4 and RPP38 form the 'wrist' subcomplex. All subunits of the RNase P complex interact with the catalytic RNA. Several subunits of RNase P are also part of the RNase MRP complex. RNase MRP consists of a catalytic RNA moiety and about 8 protein subunits; POP1, POP7, RPP25, RPP30, RPP38, RPP40 and possibly also POP4 and POP5.

The protein localises to the nucleus. It is found in the nucleolus. In terms of biological role, component of ribonuclease P, a ribonucleoprotein complex that generates mature tRNA molecules by cleaving their 5'-ends. Also a component of the MRP ribonuclease complex, which cleaves pre-rRNA sequences. The protein is Ribonuclease P protein subunit p30 (Rpp30) of Mus musculus (Mouse).